The chain runs to 150 residues: Endoribonuclease YbeY (150 aa).

Positions 113, 117, and 123 each coordinate Zn(2+).

Belongs to the endoribonuclease YbeY family. Zn(2+) is required as a cofactor.

Its subcellular location is the cytoplasm. Functionally, single strand-specific metallo-endoribonuclease involved in late-stage 70S ribosome quality control and in maturation of the 3' terminus of the 16S rRNA. The protein is Endoribonuclease YbeY of Wolbachia sp. subsp. Drosophila simulans (strain wRi).